A 597-amino-acid polypeptide reads, in one-letter code: MEKPALEVQLKTLPNSPGVYQYFDKNGKILYVGKAKNLKKRVTSYFNKNHDSHRIGVMVKKICEIKHIVVASETDALLLENNLIKKHQPRFNVMLKDDKTYPWICIKNERFPRVFPTRRLIKDGSEYYGPFTSFKTVNTLLDLIKGLYKLRTCNYDLAEDKIRNGKYKVCLEYHLGNCLGPCEGFQPEEEYNNNIEAIRQIVKGNFKDSLQRFRNQMKQHSEKMEFEDAQRIKNKIDVLENYQAKSTVVNPRINNVDVFSVVSDEGYGYVNFLQLSHGAIIRSHTIEMKKKLDESDRELLELAIVEIRQRFSSNSTEIYVPFKVDVGEELKIVIPKLGDKKKIVELSQRNAKYFRQERFKQMKIVDPDRHVNRVMAQMKEDLRLGKEPRHIECFDNSNIQGTNPVAACVVFKNGKPSKKDYRKFNIKTVEGPDDFASMEEVVFRRYRRLLNEGEDLPELIIVDGGKGQLSSGVKALETLGLRGKIAIIGIAKRLEEIFYPEDSIPLYLDKKSETLKIIQQLRNEAHRFGITFHRNKRSKTALNTELESIQGIGEKTVVELLTHFRSLKRIKEASQKELADVVGSAKAAIICNFYHSE.

In terms of domain architecture, GIY-YIG spans 15–93; that stretch reads NSPGVYQYFD…IKKHQPRFNV (79 aa). Residues 207–242 form the UVR domain; sequence KDSLQRFRNQMKQHSEKMEFEDAQRIKNKIDVLENY.

It belongs to the UvrC family. In terms of assembly, interacts with UvrB in an incision complex.

The protein localises to the cytoplasm. Its function is as follows. The UvrABC repair system catalyzes the recognition and processing of DNA lesions. UvrC both incises the 5' and 3' sides of the lesion. The N-terminal half is responsible for the 3' incision and the C-terminal half is responsible for the 5' incision. The chain is UvrABC system protein C from Christiangramia forsetii (strain DSM 17595 / CGMCC 1.15422 / KT0803) (Gramella forsetii).